The following is a 170-amino-acid chain: UPF0260 protein Rpal_2074 (170 aa).

This sequence belongs to the UPF0260 family.

The polypeptide is UPF0260 protein Rpal_2074 (Rhodopseudomonas palustris (strain TIE-1)).